A 185-amino-acid chain; its full sequence is Endoribonuclease YbeY (185 aa).

3 residues coordinate Zn(2+): H142, H146, and H152.

The protein belongs to the endoribonuclease YbeY family. Zn(2+) is required as a cofactor.

It is found in the cytoplasm. Functionally, single strand-specific metallo-endoribonuclease involved in late-stage 70S ribosome quality control and in maturation of the 3' terminus of the 16S rRNA. The polypeptide is Endoribonuclease YbeY (Parvibaculum lavamentivorans (strain DS-1 / DSM 13023 / NCIMB 13966)).